The primary structure comprises 419 residues: Mitochondrial chaperone BCS1 (419 aa).

At Met-1 to Tyr-15 the chain is on the mitochondrial intermembrane side. Residues Phe-16–Ala-32 traverse the membrane as a helical segment. At Arg-33–Arg-419 the chain is on the mitochondrial matrix side. The residue at position 181 (Tyr-181) is a Phosphotyrosine. Gly-230–Ser-237 is a binding site for ATP.

This sequence belongs to the AAA ATPase family. BCS1 subfamily. As to quaternary structure, interacts with LETM1.

Its subcellular location is the mitochondrion inner membrane. The catalysed reaction is ATP + H2O = ADP + phosphate + H(+). Chaperone necessary for the incorporation of Rieske iron-sulfur protein UQCRFS1 into the mitochondrial respiratory chain complex III. Plays an important role in the maintenance of mitochondrial tubular networks, respiratory chain assembly and formation of the LETM1 complex. The protein is Mitochondrial chaperone BCS1 (BCS1L) of Bos taurus (Bovine).